Reading from the N-terminus, the 111-residue chain is Aspartate 1-decarboxylase (111 aa).

Residue Ser25 is the Schiff-base intermediate with substrate; via pyruvic acid of the active site. Ser25 bears the Pyruvic acid (Ser) mark. Thr57 is a substrate binding site. The active-site Proton donor is Tyr58. Substrate is bound at residue 73 to 75 (GPA).

Belongs to the PanD family. In terms of assembly, heterooctamer of four alpha and four beta subunits. The cofactor is pyruvate. In terms of processing, is synthesized initially as an inactive proenzyme, which is activated by self-cleavage at a specific serine bond to produce a beta-subunit with a hydroxyl group at its C-terminus and an alpha-subunit with a pyruvoyl group at its N-terminus.

It localises to the cytoplasm. The enzyme catalyses L-aspartate + H(+) = beta-alanine + CO2. It participates in cofactor biosynthesis; (R)-pantothenate biosynthesis; beta-alanine from L-aspartate: step 1/1. Functionally, catalyzes the pyruvoyl-dependent decarboxylation of aspartate to produce beta-alanine. This Coxiella burnetii (strain RSA 493 / Nine Mile phase I) protein is Aspartate 1-decarboxylase.